The sequence spans 489 residues: Probable cytochrome P450 CYP44 (489 aa).

The tract at residues 12–31 (VEKCPYSPTSSPNTPPRTFS) is disordered. Positions 16–29 (PYSPTSSPNTPPRT) are enriched in low complexity. A heme-binding site is contributed by cysteine 438.

Belongs to the cytochrome P450 family. Requires heme as cofactor.

Cytochromes P450 are a group of heme-thiolate monooxygenases. They oxidize a variety of structurally unrelated compounds, including steroids, fatty acids, and xenobiotics. The polypeptide is Probable cytochrome P450 CYP44 (cyp-44A1) (Caenorhabditis elegans).